Reading from the N-terminus, the 420-residue chain is D-tagatose-1,6-bisphosphate aldolase subunit GatZ (420 aa).

Belongs to the GatZ/KbaZ family. GatZ subfamily. Forms a complex with GatY.

It participates in carbohydrate metabolism; D-tagatose 6-phosphate degradation; D-glyceraldehyde 3-phosphate and glycerone phosphate from D-tagatose 6-phosphate: step 2/2. In terms of biological role, component of the tagatose-1,6-bisphosphate aldolase GatYZ that is required for full activity and stability of the Y subunit. Could have a chaperone-like function for the proper and stable folding of GatY. When expressed alone, GatZ does not show any aldolase activity. Is involved in the catabolism of galactitol. In Escherichia coli O139:H28 (strain E24377A / ETEC), this protein is D-tagatose-1,6-bisphosphate aldolase subunit GatZ.